The following is a 217-amino-acid chain: Small ribosomal subunit protein uS3 (217 aa).

The 69-residue stretch at Ile-38 to Lys-106 folds into the KH type-2 domain.

Belongs to the universal ribosomal protein uS3 family. In terms of assembly, part of the 30S ribosomal subunit. Forms a tight complex with proteins S10 and S14.

Functionally, binds the lower part of the 30S subunit head. Binds mRNA in the 70S ribosome, positioning it for translation. This Streptococcus gordonii (strain Challis / ATCC 35105 / BCRC 15272 / CH1 / DL1 / V288) protein is Small ribosomal subunit protein uS3.